The sequence spans 424 residues: Serine--tRNA ligase (424 aa).

An L-serine-binding site is contributed by 231–233; the sequence is TAE. 262–264 contributes to the ATP binding site; sequence RSE. E285 is a binding site for L-serine. 349–352 provides a ligand contact to ATP; sequence EISS. S385 serves as a coordination point for L-serine.

It belongs to the class-II aminoacyl-tRNA synthetase family. Type-1 seryl-tRNA synthetase subfamily. In terms of assembly, homodimer. The tRNA molecule binds across the dimer.

It localises to the cytoplasm. The catalysed reaction is tRNA(Ser) + L-serine + ATP = L-seryl-tRNA(Ser) + AMP + diphosphate + H(+). It carries out the reaction tRNA(Sec) + L-serine + ATP = L-seryl-tRNA(Sec) + AMP + diphosphate + H(+). The protein operates within aminoacyl-tRNA biosynthesis; selenocysteinyl-tRNA(Sec) biosynthesis; L-seryl-tRNA(Sec) from L-serine and tRNA(Sec): step 1/1. Functionally, catalyzes the attachment of serine to tRNA(Ser). Is also able to aminoacylate tRNA(Sec) with serine, to form the misacylated tRNA L-seryl-tRNA(Sec), which will be further converted into selenocysteinyl-tRNA(Sec). The sequence is that of Serine--tRNA ligase from Bacillus cereus (strain ATCC 10987 / NRS 248).